The primary structure comprises 281 residues: Bidirectional sugar transporter SWEET14 (281 aa).

Residues 1 to 6 (MVLTHN) are Extracellular-facing. Residues 7 to 27 (VLAVTFGVLGNIISFIVFLAP) traverse the membrane as a helical segment. The 87-residue stretch at 11-97 (TFGVLGNIIS…ILFITYANKK (87 aa)) folds into the MtN3/slv 1 domain. The Cytoplasmic portion of the chain corresponds to 28 to 42 (VPTFVRICKKKSIEG). Residues 43-63 (FESLPYVSALFSAMLWIYYAL) traverse the membrane as a helical segment. The Extracellular portion of the chain corresponds to 64–70 (QKDGAGF). A helical transmembrane segment spans residues 71–91 (LLITINAVGCFIETIYIILFI). Residues 92 to 104 (TYANKKARISTLK) lie on the Cytoplasmic side of the membrane. Residues 105–125 (VLGLLNFLGFAAIILVCELLT) traverse the membrane as a helical segment. The Extracellular segment spans residues 126–132 (KGSNREK). Residues 133 to 153 (VLGGICVGFSVCVFAAPLSIM) form a helical membrane-spanning segment. Residues 133–216 (VLGGICVGFS…MILYVIFKYY (84 aa)) form the MtN3/slv 2 domain. At 154–166 (RVVIRTKSVEFMP) the chain is on the cytoplasmic side. Residues 167-187 (FSLSLFLTISAITWLFYGLAI) form a helical membrane-spanning segment. At 188–192 (KDFYV) the chain is on the extracellular side. Residues 193-213 (ALPNILGAFLGAVQMILYVIF) traverse the membrane as a helical segment. Residues 214–281 (KYYKTPLVVD…EDQMDKKMPN (68 aa)) are Cytoplasmic-facing. Polar residues predominate over residues 244–259 (TPASGDLTVQPQTNPD). Positions 244–281 (TPASGDLTVQPQTNPDVSHPIKTHGGDLEDQMDKKMPN) are disordered. The segment covering 267-281 (HGGDLEDQMDKKMPN) has biased composition (basic and acidic residues).

This sequence belongs to the SWEET sugar transporter family. As to quaternary structure, forms homooligomers and/or heterooligomers.

It is found in the cell membrane. Mediates both low-affinity uptake and efflux of sugar across the plasma membrane. The chain is Bidirectional sugar transporter SWEET14 from Arabidopsis thaliana (Mouse-ear cress).